Consider the following 257-residue polypeptide: UPF0246 protein Mmc1_3117 (257 aa).

This sequence belongs to the UPF0246 family.

The chain is UPF0246 protein Mmc1_3117 from Magnetococcus marinus (strain ATCC BAA-1437 / JCM 17883 / MC-1).